The primary structure comprises 144 residues: Macromomycin (144 aa).

The signal sequence occupies residues 1–32; the sequence is MLQNTSRFLARAGATVGVAAGLAFSLPADRDG. Intrachain disulfides connect Cys-68–Cys-78 and Cys-120–Cys-125.

The protein belongs to the neocarzinostatin family.

Functionally, binds non-covalently to a chromophore which is the cytotoxic and mutagenic component of the antibiotic. The chromophore binds to DNA as a weak intercalator and causes single- and double-strand breaks. The sequence is that of Macromomycin from Streptomyces macromomyceticus.